The following is a 366-amino-acid chain: Ribosomal RNA large subunit methyltransferase M (366 aa).

Residues Ser188, 221 to 224 (CPGG), Asp240, Asp260, and Asp277 contribute to the S-adenosyl-L-methionine site. The active-site Proton acceptor is Lys306.

The protein belongs to the class I-like SAM-binding methyltransferase superfamily. RNA methyltransferase RlmE family. RlmM subfamily. As to quaternary structure, monomer.

Its subcellular location is the cytoplasm. The catalysed reaction is cytidine(2498) in 23S rRNA + S-adenosyl-L-methionine = 2'-O-methylcytidine(2498) in 23S rRNA + S-adenosyl-L-homocysteine + H(+). Its function is as follows. Catalyzes the 2'-O-methylation at nucleotide C2498 in 23S rRNA. This Escherichia coli O139:H28 (strain E24377A / ETEC) protein is Ribosomal RNA large subunit methyltransferase M.